A 225-amino-acid chain; its full sequence is Cytidylate kinase (225 aa).

Gly12 to Thr20 contacts ATP.

The protein belongs to the cytidylate kinase family. Type 1 subfamily.

The protein resides in the cytoplasm. The enzyme catalyses CMP + ATP = CDP + ADP. The catalysed reaction is dCMP + ATP = dCDP + ADP. The protein is Cytidylate kinase of Proteus mirabilis (strain HI4320).